Here is a 375-residue protein sequence, read N- to C-terminus: Growth/differentiation factor 8 (375 aa).

The signal sequence occupies residues 1–18; it reads MQKLQIFVYIYLFMLTVA. The propeptide occupies 19–266; sequence GPVDLNENSE…VTDTPKRARR (248 aa). N-linked (GlcNAc...) asparagine glycosylation is found at N48 and N71. 4 cysteine pairs are disulfide-bonded: C272-C282, C281-C340, C309-C372, and C313-C374.

Belongs to the TGF-beta family. In terms of assembly, homodimer; disulfide-linked. Interacts with WFIKKN2, leading to inhibit its activity. Interacts with FSTL3. Post-translationally, synthesized as large precursor molecule that undergoes proteolytic cleavage to generate an N-terminal propeptide and a disulfide linked C-terminal dimer, which is the biologically active molecule. The circulating form consists of a latent complex of the C-terminal dimer and other proteins, including its propeptide, which maintain the C-terminal dimer in a latent, inactive state. Ligand activation requires additional cleavage of the prodomain by a tolloid-like metalloproteinase.

The protein localises to the secreted. In terms of biological role, acts specifically as a negative regulator of skeletal muscle growth. This Sylvicapra grimmia (Grey duiker) protein is Growth/differentiation factor 8 (MSTN).